The following is a 326-amino-acid chain: Microtubule-associated protein RP/EB family member 2 (326 aa).

A Phosphoserine modification is found at S9. Residues 56–158 (TMSRHDIIAW…FIQWFKKFYD (103 aa)) form the Calponin-homology (CH) domain. Phosphotyrosine is present on Y166. 2 disordered regions span residues 170 to 239 (EARQ…DKDL) and 298 to 326 (ASDE…QEEY). The segment at 186–326 (QIFNLPKKSH…EQQPQQQEEY (141 aa)) is DCTN1-binding. Low complexity predominate over residues 199 to 233 (SPTAGAAKSSPASKPGSTPSRPSSAKRASSSGSAS). Phosphoserine is present on residues S218 and S235. In terms of domain architecture, EB1 C-terminal spans 235 to 305 (SDKDLETQVI…LYASDEHEGH (71 aa)). An APC-binding region spans residues 258-301 (EGVEKERDFYFGKLREIELLCQEHGQENDDLVQRLMDVLYASDE). Positions 299-316 (SDEHEGHPEEPEAEEQVH) are enriched in basic and acidic residues. A compositionally biased stretch (low complexity) spans 317–326 (EQQPQQQEEY).

It belongs to the MAPRE family. As to quaternary structure, interacts with DCTN1. Interacts with APC (via C-terminal). Interacts with monomeric and polymerized tubulin. Interacts with SLAIN1. Interacts (via the N-terminal region) with BAG1. Interacts with ASB14. Interacts with HAX1; this interaction is essential for epidermal cell migration. Post-translationally, phosphorylated at Ser-235 by CK2 leading to enhanced cell adhesion. Phosphorylated by CDK1 and AURKB during mitosis reduces the binding affinity of MAPRE2 for microtubules. Ubiquitinated in an ASB14-dependent manner; leading to proteasomal degradation.

It is found in the cytoplasm. It localises to the cytoskeleton. In terms of biological role, adapter protein that is involved in microtubule polymerization, and spindle function by stabilizing microtubules and anchoring them at centrosomes. Therefore, ensures mitotic progression and genome stability. Acts as a central regulator of microtubule reorganization in apico-basal epithelial differentiation. Plays a role during oocyte meiosis by regulating microtubule dynamics. Participates in neurite growth by interacting with plexin B3/PLXNB3 and microtubule reorganization during apico-basal epithelial differentiation. Also plays an essential role for cell migration and focal adhesion dynamics. Mechanistically, recruits HAX1 to microtubules in order to regulate focal adhesion dynamics. The chain is Microtubule-associated protein RP/EB family member 2 (MAPRE2) from Bos taurus (Bovine).